Here is a 158-residue protein sequence, read N- to C-terminus: uncharacterized protein (158 aa).

The Nudix hydrolase domain maps to 3 to 130 (YLQRVTNCVL…DGHILDFMMK (128 aa)). Positions 34–55 (GKMESGESVRDSVIREYREETG) match the Nudix box motif. Mg(2+) contacts are provided by E49 and E53.

Belongs to the Nudix hydrolase family. Mg(2+) is required as a cofactor.

This is an uncharacterized protein from Bacillus subtilis (strain 168).